The primary structure comprises 1533 residues: Glycogen debranching enzyme (1533 aa).

Ser64 is modified (phosphoserine). Residues Asp527, His530, and Asp628 contribute to the active site.

This sequence belongs to the glycogen debranching enzyme family. As to quaternary structure, monomer. Interacts with NHLRC1/malin. Ubiquitinated. Ubiquitous. Expressed in striated skeletal muscle, heart, liver, spleen, skin, spinal cord, lung, kidney and testicle.

It localises to the cytoplasm. It carries out the reaction Transfers a segment of a (1-&gt;4)-alpha-D-glucan to a new position in an acceptor, which may be glucose or a (1-&gt;4)-alpha-D-glucan.. The enzyme catalyses Hydrolysis of (1-&gt;6)-alpha-D-glucosidic branch linkages in glycogen phosphorylase limit dextrin.. Functionally, multifunctional enzyme acting as 1,4-alpha-D-glucan:1,4-alpha-D-glucan 4-alpha-D-glycosyltransferase and amylo-1,6-glucosidase in glycogen degradation. The polypeptide is Glycogen debranching enzyme (Equus caballus (Horse)).